We begin with the raw amino-acid sequence, 805 residues long: Ubiquitin carboxyl-terminal hydrolase 5 (805 aa).

One can recognise a Rhodanese domain in the interval 159-283 (HGDALLLIDV…WVKLGGAYQS (125 aa)). Residues 359-380 (RNSPTVQKFSPHPPTTLSKLNT) are disordered. The region spanning 446 to 804 (VGLENIGNCC…SAYVLFYERI (359 aa)) is the USP domain. Cys455 functions as the Nucleophile in the catalytic mechanism. His761 (proton acceptor) is an active-site residue.

This sequence belongs to the peptidase C19 family.

The enzyme catalyses Thiol-dependent hydrolysis of ester, thioester, amide, peptide and isopeptide bonds formed by the C-terminal Gly of ubiquitin (a 76-residue protein attached to proteins as an intracellular targeting signal).. The polypeptide is Ubiquitin carboxyl-terminal hydrolase 5 (UBP5) (Saccharomyces cerevisiae (strain ATCC 204508 / S288c) (Baker's yeast)).